The following is a 708-amino-acid chain: Prolyl 3-hydroxylase 2 (708 aa).

An N-terminal signal peptide occupies residues 1–24 (MRERIWAPPLLLLLPLLLPPPLWG). TPR repeat units lie at residues 44 to 77 (FDLL…HRRL), 148 to 181 (RVPY…NPEH), 210 to 243 (HMES…YFVE), and 306 to 339 (PLHY…HPDD). Residues Asn-449 and Asn-549 are each glycosylated (N-linked (GlcNAc...) asparagine). The 115-residue stretch at 557–671 (THMVCRTALS…RCAVALWFTL (115 aa)) folds into the Fe2OG dioxygenase domain. Fe cation contacts are provided by His-580, Asp-582, and His-652. The active site involves Arg-662. The short motif at 705–708 (KDEL) is the Prevents secretion from ER element.

It belongs to the leprecan family. Fe cation is required as a cofactor. The cofactor is L-ascorbate. In terms of tissue distribution, expression localized to the epithelia of bile ducts and to the sacroplasm of heart muscle and skeletal muscle. In the pancreas, localized to a subpopulation of Langerhans islet cells and in the salivary gland, expressed in acinar cells (at protein level). Expressed in adult heart, placenta, lung, liver, skeletal muscle and kidney. Detected in fetal heart, spleen, lung, liver skeletal muscle and kidney.

Its subcellular location is the endoplasmic reticulum. It is found in the sarcoplasmic reticulum. The protein localises to the golgi apparatus. It catalyses the reaction L-prolyl-[collagen] + 2-oxoglutarate + O2 = trans-3-hydroxy-L-prolyl-[collagen] + succinate + CO2. With respect to regulation, inhibited by pyridine 2,4-dicarboxylate, an analog of 2-oxoglutarate. Prolyl 3-hydroxylase that catalyzes the post-translational formation of 3-hydroxyproline on collagens. Contributes to proline 3-hydroxylation of collagen COL4A1 and COL1A1 in tendons, the eye sclera and in the eye lens capsule. Has high activity with the type IV collagen COL4A1, and lower activity with COL1A1. Catalyzes hydroxylation of the first Pro in Gly-Pro-Hyp sequences where Hyp is 4-hydroxyproline. Has no activity on substrates that lack 4-hydroxyproline in the third position. The protein is Prolyl 3-hydroxylase 2 of Homo sapiens (Human).